The primary structure comprises 56 residues: Large ribosomal subunit protein bL32 (56 aa).

It belongs to the bacterial ribosomal protein bL32 family.

In Edwardsiella ictaluri (strain 93-146), this protein is Large ribosomal subunit protein bL32.